Here is a 312-residue protein sequence, read N- to C-terminus: Cathepsin O (312 aa).

An N-terminal signal peptide occupies residues 1–23; the sequence is MKPQLVNLLLLCCCCLGRHGVAG. Positions 24 to 98 are cleaved as a propeptide — activation peptide; that stretch reads TWSWSHQREA…EGQRPIPNVS (75 aa). N-linked (GlcNAc...) asparagine glycans are attached at residues Asn53 and Asn96. Disulfide bonds link Cys120–Cys161, Cys154–Cys195, and Cys253–Cys301. Cys123 is a catalytic residue. Catalysis depends on residues His260 and Asn280.

It belongs to the peptidase C1 family.

It localises to the lysosome. The catalysed reaction is The recombinant human enzyme hydrolyzes synthetic endopeptidase substrates including Z-Phe-Arg-NHMec and Z-Arg-Arg-NHMec.. Proteolytic enzyme possibly involved in normal cellular protein degradation and turnover. In Mus musculus (Mouse), this protein is Cathepsin O (Ctso).